The sequence spans 190 residues: Ribose 1,5-bisphosphate phosphokinase PhnN (190 aa).

The segment at 135 to 159 is disordered; it reads RGREPEPGIGQRLARPDPAPGHQAD.

Belongs to the ribose 1,5-bisphosphokinase family.

It carries out the reaction alpha-D-ribose 1,5-bisphosphate + ATP = 5-phospho-alpha-D-ribose 1-diphosphate + ADP. Its pathway is metabolic intermediate biosynthesis; 5-phospho-alpha-D-ribose 1-diphosphate biosynthesis; 5-phospho-alpha-D-ribose 1-diphosphate from D-ribose 5-phosphate (route II): step 3/3. Functionally, catalyzes the phosphorylation of ribose 1,5-bisphosphate to 5-phospho-D-ribosyl alpha-1-diphosphate (PRPP). The chain is Ribose 1,5-bisphosphate phosphokinase PhnN from Pseudofrankia inefficax (strain DSM 45817 / CECT 9037 / DDB 130130 / EuI1c) (Frankia inefficax).